The chain runs to 1534 residues: Dicer-like protein 1 (1534 aa).

A disordered region spans residues 36-70; sequence PSAEPGVEHDQISPGESDEEIEENISDQNNSSSQK. Residues 51-60 show a composition bias toward acidic residues; sequence ESDEEIEENI. The region spanning 130–311 is the Helicase ATP-binding domain; it reads LFERAKAQNT…AAATRLETLL (182 aa). 143–150 contributes to the ATP binding site; it reads LDTGSGKT. The DEAH box signature appears at 256-259; that stretch reads DEAH. The 158-residue stretch at 456–613 folds into the Helicase C-terminal domain; the sequence is ELSKHFSHAP…FCETLPEDRI (158 aa). Positions 648-738 constitute a Dicer dsRNA-binding fold domain; sequence AIAILARYAS…KSIYHKRLPA (91 aa). Positions 888 to 1016 constitute a PAZ domain; sequence KTVTFVQEND…ICAEPLKISA (129 aa). 2 consecutive RNase III domains span residues 1054–1199 and 1250–1402; these read SDYA…LSGG and ALQV…VDSD. Glu-1291, Asp-1388, and Glu-1391 together coordinate Mg(2+). Positions 1436 to 1504 constitute a DRBM domain; that stretch reads TFLHNRLANE…SERALVVLDG (69 aa). Residues Cys-1448, His-1475, Cys-1516, and Cys-1518 each contribute to the Zn(2+) site.

It belongs to the helicase family. Dicer subfamily. Mg(2+) is required as a cofactor. It depends on Mn(2+) as a cofactor.

Its function is as follows. Dicer-like endonuclease involved in cleaving double-stranded RNA in the RNA interference (RNAi) pathway. Produces 21 to 25 bp dsRNAs (siRNAs) which target the selective destruction of homologous RNAs leading to sequence-specific suppression of gene expression, called post-transcriptional gene silencing (PTGS). Part of a broad host defense response against viral infection and transposons. This chain is Dicer-like protein 1 (dcl1), found in Aspergillus clavatus (strain ATCC 1007 / CBS 513.65 / DSM 816 / NCTC 3887 / NRRL 1 / QM 1276 / 107).